Consider the following 218-residue polypeptide: LexA repressor (218 aa).

The H-T-H motif DNA-binding region spans 31-51 (IREIQDGLRISSTSVVAYNLR). Residues Ser137 and Lys176 each act as for autocatalytic cleavage activity in the active site.

Belongs to the peptidase S24 family. As to quaternary structure, homodimer.

It catalyses the reaction Hydrolysis of Ala-|-Gly bond in repressor LexA.. Represses a number of genes involved in the response to DNA damage (SOS response), including recA and lexA. In the presence of single-stranded DNA, RecA interacts with LexA causing an autocatalytic cleavage which disrupts the DNA-binding part of LexA, leading to derepression of the SOS regulon and eventually DNA repair. The polypeptide is LexA repressor (Roseiflexus sp. (strain RS-1)).